A 70-amino-acid chain; its full sequence is Small, acid-soluble spore protein 1 (70 aa).

The protein belongs to the alpha/beta-type SASP family.

Functionally, SASP are bound to spore DNA. They are double-stranded DNA-binding proteins that cause DNA to change to an a-like conformation. They protect the DNA backbone from chemical and enzymatic cleavage and are thus involved in dormant spore's high resistance to UV light. The protein is Small, acid-soluble spore protein 1 of Bacillus subtilis.